Reading from the N-terminus, the 416-residue chain is Tryptophan synthase beta chain (416 aa).

N6-(pyridoxal phosphate)lysine is present on K98.

It belongs to the TrpB family. Tetramer of two alpha and two beta chains. Requires pyridoxal 5'-phosphate as cofactor.

The catalysed reaction is (1S,2R)-1-C-(indol-3-yl)glycerol 3-phosphate + L-serine = D-glyceraldehyde 3-phosphate + L-tryptophan + H2O. It functions in the pathway amino-acid biosynthesis; L-tryptophan biosynthesis; L-tryptophan from chorismate: step 5/5. Functionally, the beta subunit is responsible for the synthesis of L-tryptophan from indole and L-serine. This is Tryptophan synthase beta chain from Ruegeria pomeroyi (strain ATCC 700808 / DSM 15171 / DSS-3) (Silicibacter pomeroyi).